We begin with the raw amino-acid sequence, 248 residues long: MGGSTSKNSFKNTTNIISNSIFNQMQSCISMLDGKNYIGVFGDGNILNHVFQDLNLSLNTSCVQKHVNEENFITNLSNQITQNLKDQEVALTQWMDAGTHDQKTDIEENIKVNLTTTLIQNCVSSLSGMNVLVVKGNGNIVENATQKQSQQIISNCLQGSKQAIDTTTGITNTVNQYSHYTSKNFFDFIADAISAVFKNIMVAAVVIVLIIVGFIAVFYFLHSRHRHEEEEEAEPLISNKVLKNAAVS.

A lipid anchor (N-myristoyl glycine; by host) is attached at Gly-2. At 2 to 199 the chain is on the cytoplasmic side; the sequence is GGSTSKNSFK…ADAISAVFKN (198 aa). Residues 200–220 traverse the membrane as a helical segment; it reads IMVAAVVIVLIIVGFIAVFYF. Topologically, residues 221–248 are extracellular; sequence LHSRHRHEEEEEAEPLISNKVLKNAAVS.

The protein belongs to the asfivirus E248R family. In terms of assembly, interacts with A151R.

The protein localises to the host membrane. It is found in the virion membrane. Its function is as follows. Essential for viral fusion with host endosomal membrane and core release. In Ornithodoros (relapsing fever ticks), this protein is Inner membrane protein pE248R.